Here is a 315-residue protein sequence, read N- to C-terminus: N-acetylneuraminate lyase (315 aa).

Aceneuramate-binding residues include Ser-59 and Ser-60. The active-site Proton donor is the Tyr-149. The Schiff-base intermediate with substrate role is filled by Lys-177. Positions 179, 202, 204, 205, and 221 each coordinate aceneuramate.

It belongs to the DapA family. NanA subfamily. In terms of assembly, homotetramer.

It localises to the cytoplasm. It carries out the reaction aceneuramate = aldehydo-N-acetyl-D-mannosamine + pyruvate. Its pathway is amino-sugar metabolism; N-acetylneuraminate degradation; D-fructose 6-phosphate from N-acetylneuraminate: step 1/5. In terms of biological role, catalyzes the reversible aldol cleavage of N-acetylneuraminic acid (sialic acid; Neu5Ac) to form pyruvate and N-acetylmannosamine (ManNAc) via a Schiff base intermediate. Cannot use 2,7-anhydro-Neu5Ac. Involved in the degradation of sialic acid, which is present in the host mucus layer and represents a much-coveted source of nutrients for R.gnavus, a prevalent member of the normal gut microbiota. The polypeptide is N-acetylneuraminate lyase (Mediterraneibacter gnavus (strain ATCC 29149 / DSM 114966 / JCM 6515 / VPI C7-9) (Ruminococcus gnavus)).